The following is a 61-amino-acid chain: MPAGVSWGQYLKFLGCALASMMAGSQAVHLYYKPLEDLRVYIEQEQHSTQVDPTAKPPESA.

The Mitochondrial matrix segment spans residues 1–9 (MPAGVSWGQ). The helical transmembrane segment at 10–32 (YLKFLGCALASMMAGSQAVHLYY) threads the bilayer. The Mitochondrial intermembrane segment spans residues 33–61 (KPLEDLRVYIEQEQHSTQVDPTAKPPESA).

This sequence belongs to the UQCC6 family. In terms of assembly, interacts with sloth1; the interaction stabilizes both components. Expressed in the brain.

Its subcellular location is the mitochondrion inner membrane. It localises to the mitochondrion. Its function is as follows. Required for the assembly and stability of the mitochondrial ubiquinol-cytochrome c reductase complex (complex III (CIII) or cytochrome b-c1 complex), a multisubunit transmembrane complex that is part of the mitochondrial electron transport chain (ETC) which drives oxidative phosphorylation. The chain is Ubiquinol-cytochrome c reductase complex assembly factor 6 from Drosophila melanogaster (Fruit fly).